We begin with the raw amino-acid sequence, 82 residues long: MVDINQIPTRRPFHRRRKTCPFSGANAPKIDYKDIKLLQRYISERGKIVPSRITAVSQKKQRELAKAIKRARFLGLLPYVVK.

The interval 1–20 is disordered; sequence MVDINQIPTRRPFHRRRKTC.

The protein belongs to the bacterial ribosomal protein bS18 family. As to quaternary structure, part of the 30S ribosomal subunit. Forms a tight heterodimer with protein bS6.

Binds as a heterodimer with protein bS6 to the central domain of the 16S rRNA, where it helps stabilize the platform of the 30S subunit. The chain is Small ribosomal subunit protein bS18 from Brucella anthropi (strain ATCC 49188 / DSM 6882 / CCUG 24695 / JCM 21032 / LMG 3331 / NBRC 15819 / NCTC 12168 / Alc 37) (Ochrobactrum anthropi).